The chain runs to 175 residues: Cytochrome c homolog (175 aa).

Residues 1–8 are Cytoplasmic-facing; sequence MSGKELNK. Residues 9-29 form a helical; Signal-anchor membrane-spanning segment; it reads IVAAILFASLIAMMVGFVANI. At 30–175 the chain is on the periplasmic side; that stretch reads LYKPTLELQH…LFLKTYVHDK (146 aa). Residues Cys-84, Cys-87, His-88, and Met-150 each contribute to the heme c site.

The protein belongs to the cytochrome c family. Post-translationally, binds 1 heme c group covalently per subunit.

The protein localises to the cell membrane. Functionally, may be involved in electron transfer from bc1 complex to aa3. The sequence is that of Cytochrome c homolog (cycM) from Rickettsia conorii (strain ATCC VR-613 / Malish 7).